The primary structure comprises 639 residues: Pheromone-processing carboxypeptidase kex1 (639 aa).

A signal peptide spans 1-30 (MAFSHAPSGWRTALLAGLIATVAWLPAIVA). Residues 31–517 (QEKTQADYFI…KAAEWKAYTR (487 aa)) are Lumenal-facing. Asn-119 is a glycosylation site (N-linked (GlcNAc...) asparagine). Catalysis depends on residues Ser-183 and Asp-384. Residues Asn-435 and Asn-443 are each glycosylated (N-linked (GlcNAc...) asparagine). Residue His-446 is part of the active site. The disordered stretch occupies residues 477 to 504 (DSLIDGEKGPLTSVGDHPNSTKAEEDKS). Asn-495 carries N-linked (GlcNAc...) asparagine glycosylation. A helical membrane pass occupies residues 518–538 (SGEVALVIAVIVACICGFLLC). Residues 539 to 639 (RSRRAKSAYK…DRGRRKEESR (101 aa)) lie on the Cytoplasmic side of the membrane. The segment at 580–639 (ADFDERELDEVPKKSGKGYGQISSEKGRVPHNDSSFSLGVDSDDDEAGSSDRGRRKEESR) is disordered. The span at 628-639 (SSDRGRRKEESR) shows a compositional bias: basic and acidic residues.

Belongs to the peptidase S10 family.

Its subcellular location is the golgi apparatus. It localises to the trans-Golgi network membrane. The enzyme catalyses Preferential release of a C-terminal arginine or lysine residue.. In terms of biological role, protease with a carboxypeptidase B-like function involved in the C-terminal processing of the lysine and arginine residues from protein precursors. Promotes cell fusion and is involved in the programmed cell death. This is Pheromone-processing carboxypeptidase kex1 (kex1) from Pyrenophora tritici-repentis (strain Pt-1C-BFP) (Wheat tan spot fungus).